The sequence spans 302 residues: tRNA pseudouridine synthase B (302 aa).

Histidine 40 lines the substrate pocket. Residue aspartate 45 is the Nucleophile of the active site. Positions 73, 178, and 199 each coordinate substrate.

It belongs to the pseudouridine synthase TruB family. Type 1 subfamily.

It carries out the reaction uridine(55) in tRNA = pseudouridine(55) in tRNA. In terms of biological role, responsible for synthesis of pseudouridine from uracil-55 in the psi GC loop of transfer RNAs. In Buchnera aphidicola subsp. Baizongia pistaciae (strain Bp), this protein is tRNA pseudouridine synthase B.